Consider the following 311-residue polypeptide: Probable manganese-dependent inorganic pyrophosphatase (311 aa).

The Mn(2+) site is built by H9, D13, D15, D77, H99, and D151.

Belongs to the PPase class C family. Mn(2+) serves as cofactor.

The protein localises to the cytoplasm. The enzyme catalyses diphosphate + H2O = 2 phosphate + H(+). The protein is Probable manganese-dependent inorganic pyrophosphatase of Streptococcus equi subsp. equi (strain 4047).